A 119-amino-acid chain; its full sequence is Large ribosomal subunit protein uL14 (119 aa).

It belongs to the universal ribosomal protein uL14 family. As to quaternary structure, part of the 50S ribosomal subunit. Forms a cluster with proteins L3 and L19. In the 70S ribosome, L14 and L19 interact and together make contacts with the 16S rRNA in bridges B5 and B8.

Functionally, binds to 23S rRNA. Forms part of two intersubunit bridges in the 70S ribosome. This chain is Large ribosomal subunit protein uL14, found in Wolbachia pipientis subsp. Culex pipiens (strain wPip).